A 216-amino-acid polypeptide reads, in one-letter code: Imidazoleglycerol-phosphate dehydratase (216 aa).

Belongs to the imidazoleglycerol-phosphate dehydratase family.

The protein localises to the cytoplasm. The enzyme catalyses D-erythro-1-(imidazol-4-yl)glycerol 3-phosphate = 3-(imidazol-4-yl)-2-oxopropyl phosphate + H2O. It functions in the pathway amino-acid biosynthesis; L-histidine biosynthesis; L-histidine from 5-phospho-alpha-D-ribose 1-diphosphate: step 6/9. This chain is Imidazoleglycerol-phosphate dehydratase, found in Nocardia farcinica (strain IFM 10152).